The sequence spans 382 residues: MIASTGKTNLLGLTQQEMEKFFDSIGEKRFRAGQVMKWIHHFGVDDFDAMTNVSKALREKLKACAEVRGPEVVSEDISSDGTRKWVVRVESGSCVETVYIPQGKRGTLCVSSQAGCALDCSFCSTGKQGFNSNLTAAEVIGQVWIANKSFGSVPATVDRAITNVVMMGMGEPLLNFDNVIAAMHLMMDDLGYGISKRRVTLSTSGVVPMIDELSKHIDVSLALSLHAPNDALRNQLVPINKKYPLKMLLESCRRYMSSLGEKRVLTIEYTMLKDINDKVEHAVEMIELLKDTPCKINLIPFNPFPHSGYERPSNNAIRRFQDLLHQAGYNVTVRTTRGEDIDAACGQLVGQVMDRTRRSERYIAVRELSAEADAAPVAVTRT.

The Proton acceptor role is filled by glutamate 96. Positions 102 to 342 (QGKRGTLCVS…VRTTRGEDID (241 aa)) constitute a Radical SAM core domain. A disulfide bridge links cysteine 109 with cysteine 345. Cysteine 116, cysteine 120, and cysteine 123 together coordinate [4Fe-4S] cluster. Residues 170 to 171 (GE), serine 202, 224 to 226 (SLH), and asparagine 302 contribute to the S-adenosyl-L-methionine site. Residue cysteine 345 is the S-methylcysteine intermediate of the active site.

It belongs to the radical SAM superfamily. RlmN family. Requires [4Fe-4S] cluster as cofactor.

It is found in the cytoplasm. The catalysed reaction is adenosine(2503) in 23S rRNA + 2 reduced [2Fe-2S]-[ferredoxin] + 2 S-adenosyl-L-methionine = 2-methyladenosine(2503) in 23S rRNA + 5'-deoxyadenosine + L-methionine + 2 oxidized [2Fe-2S]-[ferredoxin] + S-adenosyl-L-homocysteine. It carries out the reaction adenosine(37) in tRNA + 2 reduced [2Fe-2S]-[ferredoxin] + 2 S-adenosyl-L-methionine = 2-methyladenosine(37) in tRNA + 5'-deoxyadenosine + L-methionine + 2 oxidized [2Fe-2S]-[ferredoxin] + S-adenosyl-L-homocysteine. Specifically methylates position 2 of adenine 2503 in 23S rRNA and position 2 of adenine 37 in tRNAs. m2A2503 modification seems to play a crucial role in the proofreading step occurring at the peptidyl transferase center and thus would serve to optimize ribosomal fidelity. The polypeptide is Dual-specificity RNA methyltransferase RlmN (Pseudomonas syringae pv. syringae (strain B728a)).